Reading from the N-terminus, the 269-residue chain is Thiazole synthase (269 aa).

Catalysis depends on Lys112, which acts as the Schiff-base intermediate with DXP. 1-deoxy-D-xylulose 5-phosphate is bound by residues Gly173, 199–200, and 221–222; these read AG and NT.

This sequence belongs to the ThiG family. In terms of assembly, homotetramer. Forms heterodimers with either ThiH or ThiS.

It localises to the cytoplasm. It carries out the reaction [ThiS sulfur-carrier protein]-C-terminal-Gly-aminoethanethioate + 2-iminoacetate + 1-deoxy-D-xylulose 5-phosphate = [ThiS sulfur-carrier protein]-C-terminal Gly-Gly + 2-[(2R,5Z)-2-carboxy-4-methylthiazol-5(2H)-ylidene]ethyl phosphate + 2 H2O + H(+). It participates in cofactor biosynthesis; thiamine diphosphate biosynthesis. Its function is as follows. Catalyzes the rearrangement of 1-deoxy-D-xylulose 5-phosphate (DXP) to produce the thiazole phosphate moiety of thiamine. Sulfur is provided by the thiocarboxylate moiety of the carrier protein ThiS. In vitro, sulfur can be provided by H(2)S. In Caulobacter vibrioides (strain ATCC 19089 / CIP 103742 / CB 15) (Caulobacter crescentus), this protein is Thiazole synthase.